A 239-amino-acid polypeptide reads, in one-letter code: Sugar fermentation stimulation protein homolog (239 aa).

It belongs to the SfsA family.

This is Sugar fermentation stimulation protein homolog from Alcanivorax borkumensis (strain ATCC 700651 / DSM 11573 / NCIMB 13689 / SK2).